The chain runs to 423 residues: Major royal jelly protein 9 (423 aa).

Residues 1-20 (MSFNIWWLILYFSIVCQAKA) form the signal peptide. Asn110, Asn118, Asn177, Asn196, and Asn345 each carry an N-linked (GlcNAc...) asparagine glycan.

Belongs to the major royal jelly protein family. In terms of tissue distribution, expressed at very low levels in the hypopharyngeal glands of adult worker bees (at protein level); expression peaks at 12 days post eclosion. Secreted into bee venom in the sting apparatus (at protein level). Expressed in the brains of adult worker bees peaking at 12 days post eclosion (at protein level). Expressed in the spermatheca of adult queen bees (at protein level); expression levels are higher in mated queens than in virgin queens. Along with Mrjp8 expressed at very low levels in the head of worker bees compared to other major royal jelly proteins.

It localises to the secreted. Its function is as follows. Component of bee sting venom. Component of royal jelly, a substance produced in the hypopharyngeal gland containing proteins, free amino acids, fatty acids, sugars and other nutrients, which is fed to developing larvae by worker nurse bees; may be present only at trace levels. All larvae are fed some royal jelly (also known as worker jelly) early in their development but it forms the principal source of nutrition for larvae destined to become queen bees. Produced in the spermatheca of adult queen bees, along with other major royal jelly proteins, where it may act as a nutrient supply for sperm stored by mated queens, or be involved in energy metabolism. In Apis mellifera (Honeybee), this protein is Major royal jelly protein 9.